Consider the following 49-residue polypeptide: MLRLLIALLRHRVTWRFLLVLTATLGYAGLNDHLGQLEVAFCSILSCGD.

This is an uncharacterized protein from Enterobacteria phage T3 (Bacteriophage T3).